The following is a 56-amino-acid chain: Large ribosomal subunit protein bL33 (56 aa).

Residues 1-12 (MASKGGREKIKL) show a composition bias toward basic and acidic residues. The disordered stretch occupies residues 1-27 (MASKGGREKIKLESTAGTGHFYTTNKN).

Belongs to the bacterial ribosomal protein bL33 family.

In Leptothrix cholodnii (strain ATCC 51168 / LMG 8142 / SP-6) (Leptothrix discophora (strain SP-6)), this protein is Large ribosomal subunit protein bL33.